The primary structure comprises 200 residues: Glycerol-3-phosphate acyltransferase (200 aa).

5 helical membrane-spanning segments follow: residues 2–22 (FNIS…AVIV), 51–71 (KAAA…VLLA), 84–104 (AIAA…FFGF), 114–134 (LGVL…IWLV), and 159–179 (FFMP…LVLF).

Belongs to the PlsY family. In terms of assembly, probably interacts with PlsX.

The protein localises to the cell inner membrane. The catalysed reaction is an acyl phosphate + sn-glycerol 3-phosphate = a 1-acyl-sn-glycero-3-phosphate + phosphate. The protein operates within lipid metabolism; phospholipid metabolism. Functionally, catalyzes the transfer of an acyl group from acyl-phosphate (acyl-PO(4)) to glycerol-3-phosphate (G3P) to form lysophosphatidic acid (LPA). This enzyme utilizes acyl-phosphate as fatty acyl donor, but not acyl-CoA or acyl-ACP. In Neisseria meningitidis serogroup C (strain 053442), this protein is Glycerol-3-phosphate acyltransferase.